Here is a 491-residue protein sequence, read N- to C-terminus: (S)-canadine synthase (491 aa).

The chain crosses the membrane as a helical span at residues 6–26 (LLVCATVAIVFATTTIIRILF). Heme is bound at residue Cys-434.

It belongs to the cytochrome P450 family. Heme serves as cofactor. Expressed at low levels in roots.

It is found in the endoplasmic reticulum membrane. Its subcellular location is the microsome membrane. It catalyses the reaction (S)-tetrahydrocolumbamine + reduced [NADPH--hemoprotein reductase] + O2 = (S)-canadine + oxidized [NADPH--hemoprotein reductase] + 2 H2O + H(+). Its function is as follows. Involved in the last but one step of the biosynthesis of berberine, an antimicrobial benzylisoquinoline alkaloid. Converts (S)-tetrahydrocolumbamine (THC) to (S)-tetrahydroberberine (THB) also called (S)-canadine. The sequence is that of (S)-canadine synthase (CYP719A1) from Coptis japonica (Japanese goldthread).